The following is a 285-amino-acid chain: Protein HEXIM1 (285 aa).

Disordered stretches follow at residues 1–56 (MSEV…QNPG) and 132–196 (LMED…LQKD). Over residues 23-36 (GGWHHPVEREEHPV) the composition is skewed to basic and acidic residues. The span at 168 to 180 (TDDDLEEEEDEAG) shows a compositional bias: acidic residues. A coiled-coil region spans residues 213–284 (SKQDLIKEYL…QEGKQVAADS (72 aa)).

The protein belongs to the HEXIM family. In terms of assembly, homooligomer and heterooligomer. Core component of the 7SK RNP complex.

It localises to the nucleus. The protein localises to the cytoplasm. Transcriptional regulator which functions as a general RNA polymerase II transcription inhibitor. Core component of the 7SK RNP complex: in cooperation with 7SK snRNA sequesters P-TEFb in a large inactive 7SK snRNP complex preventing RNA polymerase II phosphorylation and subsequent transcriptional elongation. Plays a role in the regulation of DNA virus-mediated innate immune response by assembling into the HDP-RNP complex, a complex that serves as a platform for IRF3 phosphorylation and subsequent innate immune response activation through the cGAS-STING pathway. The sequence is that of Protein HEXIM1 (hexim1) from Xenopus laevis (African clawed frog).